The sequence spans 493 residues: Putative lon protease homolog (493 aa).

ATP is bound at residue 52 to 59 (GPPGVGKS).

This sequence belongs to the peptidase S16 family.

This chain is Putative lon protease homolog, found in Thermoplasma acidophilum (strain ATCC 25905 / DSM 1728 / JCM 9062 / NBRC 15155 / AMRC-C165).